The sequence spans 264 residues: 3-methyl-2-oxobutanoate hydroxymethyltransferase (264 aa).

Mg(2+) is bound by residues Asp45 and Asp84. 3-methyl-2-oxobutanoate contacts are provided by residues 45–46, Asp84, and Lys113; that span reads DS. Glu115 is a binding site for Mg(2+). Glu182 functions as the Proton acceptor in the catalytic mechanism.

This sequence belongs to the PanB family. In terms of assembly, homodecamer; pentamer of dimers. The cofactor is Mg(2+).

It localises to the cytoplasm. The enzyme catalyses 3-methyl-2-oxobutanoate + (6R)-5,10-methylene-5,6,7,8-tetrahydrofolate + H2O = 2-dehydropantoate + (6S)-5,6,7,8-tetrahydrofolate. The protein operates within cofactor biosynthesis; (R)-pantothenate biosynthesis; (R)-pantoate from 3-methyl-2-oxobutanoate: step 1/2. Its function is as follows. Catalyzes the reversible reaction in which hydroxymethyl group from 5,10-methylenetetrahydrofolate is transferred onto alpha-ketoisovalerate to form ketopantoate. This is 3-methyl-2-oxobutanoate hydroxymethyltransferase from Helicobacter hepaticus (strain ATCC 51449 / 3B1).